Here is a 304-residue protein sequence, read N- to C-terminus: UTP--glucose-1-phosphate uridylyltransferase 1 (304 aa).

Belongs to the UDPGP type 2 family.

The enzyme catalyses alpha-D-glucose 1-phosphate + UTP + H(+) = UDP-alpha-D-glucose + diphosphate. Its pathway is carbohydrate metabolism; nucleotide-sugar metabolism. This is UTP--glucose-1-phosphate uridylyltransferase 1 (hasC1) from Streptococcus pyogenes serotype M3 (strain ATCC BAA-595 / MGAS315).